The following is a 1476-amino-acid chain: ABC transporter G family member 17 (1476 aa).

Disordered stretches follow at residues 13-45 (SENN…YDYD) and 68-91 (FREI…KPEN). Positions 14 to 67 (ENNNNNNNNNNNNNNNNNNNLNNNNDNDYDYDSINNIEEKFENVSKELEGQSIK) form a coiled coil. A compositionally biased stretch (low complexity) spans 15–39 (NNNNNNNNNNNNNNNNNNNLNNNND). The ABC transporter 1 domain maps to 151–402 (LNPFNYFKKD…FLDLGFDCEP (252 aa)). The 245-residue stretch at 507–751 (WGDKFTLTSR…SLSVKGENYL (245 aa)) folds into the ABC transmembrane type-2 1 domain. 5 consecutive transmembrane segments (helical) span residues 517–537 (FLTI…QPLT), 547–567 (AIFT…HGAL), 592–612 (ILID…IVYF), 623–643 (FFIF…LFRG), and 764–784 (LNVV…LFAV). One can recognise an ABC transporter 2 domain in the interval 838–1082 (FSWKSISYTV…LTSYFERHGV (245 aa)). Residue 874 to 881 (GSSGAGKT) participates in ATP binding. 6 helical membrane-spanning segments follow: residues 1182-1202 (FYTM…GFTF), 1219-1239 (SWEA…MFFI), 1260-1280 (LSMI…FFIA), 1298-1318 (WLMH…LGAA), 1322-1342 (IAIS…LCGV), and 1450-1470 (FGII…FVYL). Positions 1182–1405 (FYTMGSFAQS…TDCQTYSAPF (224 aa)) constitute an ABC transmembrane type-2 2 domain.

This sequence belongs to the ABC transporter superfamily. ABCG family. PDR (TC 3.A.1.205) subfamily.

It is found in the membrane. This Dictyostelium discoideum (Social amoeba) protein is ABC transporter G family member 17 (abcG17-1).